The following is a 258-amino-acid chain: Development-specific 25 kDa protein (258 aa).

An NAD(+)-binding site is contributed by 10 to 34; the sequence is VYVGGFSGFGYQVCQMMMKKPMKHL. Ser138 lines the substrate pocket. The Proton acceptor role is filled by Tyr151.

This sequence belongs to the short-chain dehydrogenases/reductases (SDR) family.

In Sarcophaga peregrina (Flesh fly), this protein is Development-specific 25 kDa protein.